The sequence spans 283 residues: Bifunctional protein FolD (283 aa).

Residues 157-159 and I224 each bind NADP(+); that span reads GNG.

This sequence belongs to the tetrahydrofolate dehydrogenase/cyclohydrolase family. Homodimer.

The enzyme catalyses (6R)-5,10-methylene-5,6,7,8-tetrahydrofolate + NADP(+) = (6R)-5,10-methenyltetrahydrofolate + NADPH. It catalyses the reaction (6R)-5,10-methenyltetrahydrofolate + H2O = (6R)-10-formyltetrahydrofolate + H(+). Its pathway is one-carbon metabolism; tetrahydrofolate interconversion. Catalyzes the oxidation of 5,10-methylenetetrahydrofolate to 5,10-methenyltetrahydrofolate and then the hydrolysis of 5,10-methenyltetrahydrofolate to 10-formyltetrahydrofolate. The protein is Bifunctional protein FolD of Mycoplasmoides gallisepticum (strain R(low / passage 15 / clone 2)) (Mycoplasma gallisepticum).